The sequence spans 27 residues: Caerulein precursor fragment R4 (27 aa).

Expressed by the skin glands.

It is found in the secreted. In terms of biological role, antimicrobial peptide. In Xenopus ruwenzoriensis (Uganda clawed frog), this protein is Caerulein precursor fragment R4.